Reading from the N-terminus, the 288-residue chain is MSRVANNRDWADDEDLEDSNELPQSTTTTNKDGTQTIVTWRFNDDGKKVKTTRRIRFTKVKEIVNPRVAERKSWGKFGLSQKDAAGPASDTTSVGENIIFRPSTNWRKDAKEEVSDAGAMKNKLKDKQVKCRICSGEHFTAKCPFKGTMAPLGEEGAVDVAAGHADTPEGPGGLGAGKSSYVPPHLRNGGTAGGERMGGGKFERDDLATLRVTNVSEMAEEQELRDMFERFGRVTRVFLAKDRETGLAKGFAFISFQERSDAAKACEKMDGYGFKHLILRVEFAKKAS.

Residues 1–35 (MSRVANNRDWADDEDLEDSNELPQSTTTTNKDGTQ) form a disordered region. A compositionally biased stretch (acidic residues) spans 11–20 (ADDEDLEDSN). Polar residues predominate over residues 21 to 35 (ELPQSTTTTNKDGTQ). Positions 208–286 (ATLRVTNVSE…LILRVEFAKK (79 aa)) constitute an RRM domain.

This sequence belongs to the eIF-3 subunit G family. In terms of assembly, component of the eukaryotic translation initiation factor 3 (eIF-3) complex.

The protein localises to the cytoplasm. Its function is as follows. RNA-binding component of the eukaryotic translation initiation factor 3 (eIF-3) complex, which is involved in protein synthesis of a specialized repertoire of mRNAs and, together with other initiation factors, stimulates binding of mRNA and methionyl-tRNAi to the 40S ribosome. The eIF-3 complex specifically targets and initiates translation of a subset of mRNAs involved in cell proliferation. This subunit can bind 18S rRNA. The polypeptide is Eukaryotic translation initiation factor 3 subunit G (tif35) (Botryotinia fuckeliana (strain B05.10) (Noble rot fungus)).